Consider the following 811-residue polypeptide: tRNA(Met) cytidine acetyltransferase TmcA (811 aa).

Residues Gln-267 and Arg-440 each coordinate ATP. Residues 474-663 (RKEVYLEEPD…GEFTAIVLKP (190 aa)) enclose the N-acetyltransferase domain. Acetyl-CoA contacts are provided by residues 590–592 (IAT), Glu-630, and Arg-637.

It belongs to the TmcA family.

It is found in the cytoplasm. It catalyses the reaction cytidine(34) in elongator tRNA(Met) + acetyl-CoA + ATP + H2O = N(4)-acetylcytidine(34) in elongator tRNA(Met) + ADP + phosphate + CoA + H(+). The enzyme catalyses a cytidine in RNA + acetyl-CoA + ATP + H2O = an N(4)-acetylcytidine in RNA + ADP + phosphate + CoA + H(+). It carries out the reaction a cytidine in tRNA + acetyl-CoA + ATP + H2O = an N(4)-acetylcytidine in tRNA + ADP + phosphate + CoA + H(+). The catalysed reaction is a cytidine in mRNA + acetyl-CoA + ATP + H2O = an N(4)-acetylcytidine in mRNA + ADP + phosphate + CoA + H(+). Catalyzes the formation of N(4)-acetylcytidine (ac(4)C) at the wobble position of tRNA(Met), by using acetyl-CoA as an acetyl donor and ATP (or GTP). Functionally, catalyzes the formation of 404 N(4)-acetylcytidine (ac(4)C) sites in RNA, almost always on the middle C of a CCG motif. There 173 ac(4)C sites in rRNA, 35 in non-coding (nc)RNA, 119 in mRNA and 77 in tRNA. More acetylation is observed at 85 and 95 than at 65 or 75 degrees Celsius. The chain is tRNA(Met) cytidine acetyltransferase TmcA from Thermococcus kodakarensis (strain ATCC BAA-918 / JCM 12380 / KOD1) (Pyrococcus kodakaraensis (strain KOD1)).